The following is a 919-amino-acid chain: Lipoxygenase 3, chloroplastic (919 aa).

The transit peptide at 1–52 (MALAKELMGYPLITERSSLVSSASHFKKRTQSTQFSINPFDRRPRKTKSGVV) directs the protein to the chloroplast. One can recognise a PLAT domain in the interval 86–222 (VRAVVTVRNK…DHPDKRIFFT (137 aa)). A Lipoxygenase domain is found at 225–919 (PYLPNETPSG…CRGVPNSVSI (695 aa)). A disordered region spans residues 272-310 (PDKSSELSRPKLGGKEVPYPRRCRTGRQSTVSDKDAESR). Residues His-578, His-583, His-770, Asn-774, and Ile-919 each contribute to the Fe cation site.

The protein belongs to the lipoxygenase family. Fe cation serves as cofactor. Expressed in roots and leaves.

Its subcellular location is the plastid. It is found in the chloroplast. The catalysed reaction is (9Z,12Z)-octadecadienoate + O2 = (13S)-hydroperoxy-(9Z,11E)-octadecadienoate. It catalyses the reaction (9Z,12Z,15Z)-octadecatrienoate + O2 = (13S)-hydroperoxy-(9Z,11E,15Z)-octadecatrienoate. It participates in lipid metabolism; oxylipin biosynthesis. Its function is as follows. 13S-lipoxygenase that can use linolenic acid as substrates. Plant lipoxygenases may be involved in a number of diverse aspects of plant physiology including growth and development, pest resistance, and senescence or responses to wounding. Catalyzes the hydroperoxidation of lipids containing a cis,cis-1,4-pentadiene structure. The protein is Lipoxygenase 3, chloroplastic (LOX3) of Arabidopsis thaliana (Mouse-ear cress).